A 365-amino-acid chain; its full sequence is Homeobox protein knotted-1-like 7 (365 aa).

Residues 1–11 (MEELEGHRGEG) are compositionally biased toward basic and acidic residues. The disordered stretch occupies residues 1–20 (MEELEGHRGEGRLPPPPPLL). An ELK domain is found at 227–247 (ALKRHLLRKYSGYLGGLRKEL). A DNA-binding region (homeobox; TALE-type) is located at residues 248 to 311 (SKKRKKGKLP…NQRKRHWKPT (64 aa)).

It belongs to the TALE/KNOX homeobox family.

The protein resides in the nucleus. Probable transcription factor that may be involved in shoot formation during embryogenesis. The polypeptide is Homeobox protein knotted-1-like 7 (OSH3) (Oryza sativa subsp. japonica (Rice)).